The chain runs to 163 residues: Cuticle protein 38 (163 aa).

14 tandem repeats follow at residues 7-10, 13-16, 20-23, 26-29, 56-59, 62-65, 68-71, 75-78, 81-84, 93-96, 123-126, 135-138, 141-144, and 156-159.

In terms of biological role, component of the cuticle of migratory locust which contains more than 100 different structural proteins. The sequence is that of Cuticle protein 38 from Locusta migratoria (Migratory locust).